Reading from the N-terminus, the 90-residue chain is Small ribosomal subunit protein uS19 (90 aa).

It belongs to the universal ribosomal protein uS19 family.

Functionally, protein S19 forms a complex with S13 that binds strongly to the 16S ribosomal RNA. The protein is Small ribosomal subunit protein uS19 of Rhizorhabdus wittichii (strain DSM 6014 / CCUG 31198 / JCM 15750 / NBRC 105917 / EY 4224 / RW1) (Sphingomonas wittichii).